A 738-amino-acid chain; its full sequence is Dipeptidyl peptidase 3 (738 aa).

N-acetylalanine is present on Ala2. Position 450 (His450) interacts with Zn(2+). The active site involves Glu451. 2 residues coordinate Zn(2+): His455 and Glu508.

This sequence belongs to the peptidase M49 family. Requires Zn(2+) as cofactor.

The protein localises to the cytoplasm. It is found in the cytosol. The enzyme catalyses Release of an N-terminal dipeptide from a peptide comprising four or more residues, with broad specificity. Also acts on dipeptidyl 2-naphthylamides.. In terms of biological role, cleaves and degrades bioactive peptides, including angiotensin, Leu-enkephalin and Met-enkephalin. Also cleaves Arg-Arg-beta-naphthylamide (in vitro). The polypeptide is Dipeptidyl peptidase 3 (Dpp3) (Mus musculus (Mouse)).